Reading from the N-terminus, the 209-residue chain is Probable glutathione peroxidase 8-B (209 aa).

The helical transmembrane segment at 18–40 (VFLVFFSMVLCTGILCVLQLKFL) threads the bilayer. Cysteine 79 is a catalytic residue.

The protein belongs to the glutathione peroxidase family.

Its subcellular location is the membrane. The enzyme catalyses 2 glutathione + H2O2 = glutathione disulfide + 2 H2O. This Xenopus laevis (African clawed frog) protein is Probable glutathione peroxidase 8-B (gpx8-b).